A 189-amino-acid polypeptide reads, in one-letter code: Molybdenum cofactor guanylyltransferase (189 aa).

GTP is bound by residues 10–12, Lys23, Asn51, Asp69, and Asp99; that span reads LAG. Asp99 is a binding site for Mg(2+).

It belongs to the MobA family. As to quaternary structure, monomer. Mg(2+) serves as cofactor.

It localises to the cytoplasm. The enzyme catalyses Mo-molybdopterin + GTP + H(+) = Mo-molybdopterin guanine dinucleotide + diphosphate. Its function is as follows. Transfers a GMP moiety from GTP to Mo-molybdopterin (Mo-MPT) cofactor (Moco or molybdenum cofactor) to form Mo-molybdopterin guanine dinucleotide (Mo-MGD) cofactor. This chain is Molybdenum cofactor guanylyltransferase, found in Pasteurella multocida (strain Pm70).